The chain runs to 104 residues: Large ribosomal subunit protein uL24 (104 aa).

The protein belongs to the universal ribosomal protein uL24 family. As to quaternary structure, part of the 50S ribosomal subunit.

Its function is as follows. One of two assembly initiator proteins, it binds directly to the 5'-end of the 23S rRNA, where it nucleates assembly of the 50S subunit. One of the proteins that surrounds the polypeptide exit tunnel on the outside of the subunit. The chain is Large ribosomal subunit protein uL24 from Pseudomonas fluorescens (strain ATCC BAA-477 / NRRL B-23932 / Pf-5).